A 797-amino-acid chain; its full sequence is Protocadherin beta-9 (797 aa).

The signal sequence occupies residues 1 to 26; it reads MKTRGFSFPRQRQVLFLFLFWGVSLA. At 27–690 the chain is on the extracellular side; that stretch reads GSGFGRYSVT…AQADLLTVYL (664 aa). 5 Cadherin domains span residues 35–133, 138–242, 247–347, 352–451, and 456–561; these read VTEE…SPVF, MVLK…VPQF, YETQ…PPEL, LSNS…APAF, and YTLF…SPFV. N169 is a glycosylation site (N-linked (GlcNAc...) asparagine). An N-linked (GlcNAc...) asparagine glycan is attached at N418. An N-linked (GlcNAc...) asparagine glycan is attached at N567. One can recognise a Cadherin 6 domain in the interval 568-671; the sequence is GSAPCTELVP…LVDGFSQPYL (104 aa). A helical membrane pass occupies residues 691 to 711; it reads VVALASVSSLFLLSVLLFVAV. Residues 712–797 are Cytoplasmic-facing; that stretch reads RLCRRSRAAS…TLPNSFGFNY (86 aa). Residues 777–797 are disordered; sequence HRGGKEIEENSTLPNSFGFNY. Residues 786-797 are compositionally biased toward polar residues; the sequence is NSTLPNSFGFNY.

The protein localises to the cell membrane. Potential calcium-dependent cell-adhesion protein. May be involved in the establishment and maintenance of specific neuronal connections in the brain. The sequence is that of Protocadherin beta-9 (PCDHB9) from Homo sapiens (Human).